The following is a 203-amino-acid chain: GTP-binding protein YPTM2 (203 aa).

Residues 15–23, 33–40, 63–67, 121–124, and 151–153 contribute to the GTP site; these read GDSGVGKSC, YLDSYIST, DTAGQ, NKSD, and SAK. The Effector region signature appears at 37–45; the sequence is YISTIGVDF. 2 S-geranylgeranyl cysteine lipidation sites follow: Cys200 and Cys201.

Belongs to the small GTPase superfamily. Rab family. Its expression is weak in stems, higher in roots, leaves and coleoptiles, but highest in flowers.

The protein localises to the cell membrane. Protein transport. Probably involved in vesicular traffic. The chain is GTP-binding protein YPTM2 (YPTM2) from Zea mays (Maize).